We begin with the raw amino-acid sequence, 327 residues long: BarH-like 1 homeobox protein (327 aa).

Disordered stretches follow at residues 1–90 (MEGS…AQSR), 113–181 (PYSS…PRKA), and 303–327 (LQGA…AQPR). The span at 33 to 54 (RSPLELSPRSESSSDCSSPASP) shows a compositional bias: low complexity. Residues 79–90 (QPGQLSAPAQSR) show a composition bias toward polar residues. 2 stretches are compositionally biased toward basic and acidic residues: residues 133-143 (AGEDFRDKLDK) and 152-166 (SEYK…EISS). A DNA-binding region (homeobox) is located at residues 178 to 237 (PRKARTAFTDHQLAQLERSFERQKYLSVQDRMELAASLNLTDTQVKTWYQNRRTKWKRQT). Residues 308–318 (EPPPPLPPLPG) are compositionally biased toward pro residues.

This sequence belongs to the BAR homeobox family.

The protein resides in the nucleus. In Mus musculus (Mouse), this protein is BarH-like 1 homeobox protein (Barhl1).